Here is a 266-residue protein sequence, read N- to C-terminus: UPF0294 protein YafD (266 aa).

Belongs to the UPF0294 family.

It is found in the cytoplasm. This is UPF0294 protein YafD from Salmonella newport (strain SL254).